The sequence spans 265 residues: 3-methyl-2-oxobutanoate hydroxymethyltransferase (265 aa).

Mg(2+) is bound by residues Asp43 and Asp82. 3-methyl-2-oxobutanoate is bound by residues 43 to 44, Asp82, and Lys111; that span reads DS. Glu113 is a Mg(2+) binding site. Glu180 acts as the Proton acceptor in catalysis.

It belongs to the PanB family. As to quaternary structure, homodecamer; pentamer of dimers. Mg(2+) is required as a cofactor.

Its subcellular location is the cytoplasm. The catalysed reaction is 3-methyl-2-oxobutanoate + (6R)-5,10-methylene-5,6,7,8-tetrahydrofolate + H2O = 2-dehydropantoate + (6S)-5,6,7,8-tetrahydrofolate. The protein operates within cofactor biosynthesis; (R)-pantothenate biosynthesis; (R)-pantoate from 3-methyl-2-oxobutanoate: step 1/2. Catalyzes the reversible reaction in which hydroxymethyl group from 5,10-methylenetetrahydrofolate is transferred onto alpha-ketoisovalerate to form ketopantoate. This chain is 3-methyl-2-oxobutanoate hydroxymethyltransferase, found in Francisella tularensis subsp. novicida (strain U112).